Consider the following 379-residue polypeptide: UDP-4-amino-4-deoxy-L-arabinose--oxoglutarate aminotransferase (379 aa).

Lys182 is subject to N6-(pyridoxal phosphate)lysine.

This sequence belongs to the DegT/DnrJ/EryC1 family. ArnB subfamily. As to quaternary structure, homodimer. The cofactor is pyridoxal 5'-phosphate.

It catalyses the reaction UDP-4-amino-4-deoxy-beta-L-arabinose + 2-oxoglutarate = UDP-beta-L-threo-pentopyranos-4-ulose + L-glutamate. It participates in nucleotide-sugar biosynthesis; UDP-4-deoxy-4-formamido-beta-L-arabinose biosynthesis; UDP-4-deoxy-4-formamido-beta-L-arabinose from UDP-alpha-D-glucuronate: step 2/3. It functions in the pathway bacterial outer membrane biogenesis; lipopolysaccharide biosynthesis. In terms of biological role, catalyzes the conversion of UDP-4-keto-arabinose (UDP-Ara4O) to UDP-4-amino-4-deoxy-L-arabinose (UDP-L-Ara4N). The modified arabinose is attached to lipid A and is required for resistance to polymyxin and cationic antimicrobial peptides. The chain is UDP-4-amino-4-deoxy-L-arabinose--oxoglutarate aminotransferase from Escherichia coli O81 (strain ED1a).